A 330-amino-acid chain; its full sequence is DNA-directed RNA polymerase subunit alpha (330 aa).

Positions 1-236 are alpha N-terminal domain (alpha-NTD); sequence MQGSVTEFLK…EQLDAFVDLR (236 aa). Residues 250–330 form an alpha C-terminal domain (alpha-CTD) region; sequence FDPILLRPVD…NWPPASIAED (81 aa).

Belongs to the RNA polymerase alpha chain family. In terms of assembly, homodimer. The RNAP catalytic core consists of 2 alpha, 1 beta, 1 beta' and 1 omega subunit. When a sigma factor is associated with the core the holoenzyme is formed, which can initiate transcription.

The catalysed reaction is RNA(n) + a ribonucleoside 5'-triphosphate = RNA(n+1) + diphosphate. Its function is as follows. DNA-dependent RNA polymerase catalyzes the transcription of DNA into RNA using the four ribonucleoside triphosphates as substrates. The sequence is that of DNA-directed RNA polymerase subunit alpha from Vibrio atlanticus (strain LGP32) (Vibrio splendidus (strain Mel32)).